Reading from the N-terminus, the 221-residue chain is PKHD-type hydroxylase P9515_13321 (221 aa).

Residues 80–174 (TIHGIMFTKS…RLVCVGWIES (95 aa)) form the Fe2OG dioxygenase domain. Positions 98, 100, and 155 each coordinate Fe cation. Arginine 165 is a binding site for 2-oxoglutarate.

The cofactor is Fe(2+). Requires L-ascorbate as cofactor.

This Prochlorococcus marinus (strain MIT 9515) protein is PKHD-type hydroxylase P9515_13321.